The sequence spans 192 residues: Xanthine phosphoribosyltransferase (192 aa).

Xanthine-binding residues include Leu20 and Asn27. Residue 128-132 (ANGQA) participates in 5-phospho-alpha-D-ribose 1-diphosphate binding. Lys156 lines the xanthine pocket.

It belongs to the purine/pyrimidine phosphoribosyltransferase family. Xpt subfamily. In terms of assembly, homodimer.

It localises to the cytoplasm. It catalyses the reaction XMP + diphosphate = xanthine + 5-phospho-alpha-D-ribose 1-diphosphate. It participates in purine metabolism; XMP biosynthesis via salvage pathway; XMP from xanthine: step 1/1. Converts the preformed base xanthine, a product of nucleic acid breakdown, to xanthosine 5'-monophosphate (XMP), so it can be reused for RNA or DNA synthesis. The sequence is that of Xanthine phosphoribosyltransferase from Listeria innocua serovar 6a (strain ATCC BAA-680 / CLIP 11262).